A 479-amino-acid polypeptide reads, in one-letter code: Aspartyl/glutamyl-tRNA(Asn/Gln) amidotransferase subunit B (479 aa).

Belongs to the GatB/GatE family. GatB subfamily. As to quaternary structure, heterotrimer of A, B and C subunits.

It catalyses the reaction L-glutamyl-tRNA(Gln) + L-glutamine + ATP + H2O = L-glutaminyl-tRNA(Gln) + L-glutamate + ADP + phosphate + H(+). The catalysed reaction is L-aspartyl-tRNA(Asn) + L-glutamine + ATP + H2O = L-asparaginyl-tRNA(Asn) + L-glutamate + ADP + phosphate + 2 H(+). In terms of biological role, allows the formation of correctly charged Asn-tRNA(Asn) or Gln-tRNA(Gln) through the transamidation of misacylated Asp-tRNA(Asn) or Glu-tRNA(Gln) in organisms which lack either or both of asparaginyl-tRNA or glutaminyl-tRNA synthetases. The reaction takes place in the presence of glutamine and ATP through an activated phospho-Asp-tRNA(Asn) or phospho-Glu-tRNA(Gln). The protein is Aspartyl/glutamyl-tRNA(Asn/Gln) amidotransferase subunit B of Clostridium beijerinckii (strain ATCC 51743 / NCIMB 8052) (Clostridium acetobutylicum).